The following is a 206-amino-acid chain: Triafestin-2 (206 aa).

A signal peptide spans 1 to 18; that stretch reads MKTILAVIFFGILAFAFA. Residues Asn25, Asn55, and Asn178 are each glycosylated (N-linked (GlcNAc...) asparagine).

This sequence belongs to the calycin superfamily. Triabin family. In terms of assembly, interacts with host coagulation factor XII (F12) (inactive and activated) (via amino acids 1-77). Interacts with host high molecular weight kininogen (KNG1) (via amino acids 402-532). Salivary gland (at protein level).

Its subcellular location is the secreted. Zn(2+) modulates binding to host coagulation factor XII (F12) and high molecular weight kininogen (KNG1). Suppresses activation of the host plasma kallikrein-kinin system, leading to inhibition of the intrinsic coagulation pathway. Blocks host coagulation factor XII (F12) and prekallikrein (KLKB1) reciprocal activation without affecting their amidolytic activities. Blocks binding of host F12 and high molecular weight kininogen (KNG1) to negatively charged surfaces. Attenuates generation of bradykinin by interfering with activation of host kallikrein-kinin system. This Triatoma infestans (Assassin bug) protein is Triafestin-2.